The chain runs to 47 residues: Conotoxin reg3.11 (47 aa).

Positions 1-31 (DQPVERHAENKRHLIPAVMRAMTMNADRRVQ) are excised as a propeptide. Intrachain disulfides connect C32–C44, C33–C42, and C38–C45. Residues 46–47 (YH) constitute a propeptide that is removed on maturation.

Belongs to the conotoxin M superfamily. As to expression, expressed by the venom duct.

The protein localises to the secreted. This chain is Conotoxin reg3.11, found in Conus regius (Crown cone).